The primary structure comprises 307 residues: Heme A synthase (307 aa).

The Cytoplasmic segment spans residues 1 to 6 (MKFALR). A helical membrane pass occupies residues 7-27 (LLSVITTFVMLIVLIGGALVT). Residues 28 to 65 (KTGSGLGCGRQWPLCHGRFFPEMNPASIIEWSHRMSTG) are Extracellular-facing. A disulfide bridge links Cys-35 with Cys-42. Glu-57 is a catalytic residue. His-60 lines the heme o pocket. The chain crosses the membrane as a helical span at residues 66-86 (VSTILVLALAVLCWKKISPVF). The Cytoplasmic segment spans residues 87–92 (RETKFL). A helical transmembrane segment spans residues 93–113 (VIMSIIFLLLQALLGALAVVF). Topologically, residues 114–121 (GSNALVMA) are extracellular. A helical transmembrane segment spans residues 122 to 142 (LHFGISLISFASVLLLALLVF). Position 123 (His-123) interacts with heme o. The Cytoplasmic portion of the chain corresponds to 143–161 (EATRSETKLVKPLHIGKKM). The chain crosses the membrane as a helical span at residues 162–182 (QFHIYGLITYTYIVVYTGAYV). Topologically, residues 183 to 216 (RHTKSSLACSVFPFCSKDGALPAYFNQWVQMSHR) are extracellular. A disulfide bridge links Cys-191 with Cys-197. Position 215 (His-215) interacts with heme b. The helical transmembrane segment at 217–237 (AAALLLFVWIFVAMFHAMKHY) threads the bilayer. At 238–242 (KEQKQ) the chain is on the cytoplasmic side. The chain crosses the membrane as a helical span at residues 243–263 (LYYGWIISAILITLQAISGVM). At 264–274 (SVYSQLALGYA) the chain is on the extracellular side. Residues 275–295 (LAHSFFISCLFGVLCYFCLLI) traverse the membrane as a helical segment. His-277 contributes to the heme b binding site. The Cytoplasmic segment spans residues 296–307 (ARFKYESKEPFK).

The protein belongs to the COX15/CtaA family. Type 1 subfamily. Interacts with CtaB. It depends on heme b as a cofactor.

The protein resides in the cell membrane. The enzyme catalyses Fe(II)-heme o + 2 A + H2O = Fe(II)-heme a + 2 AH2. The protein operates within porphyrin-containing compound metabolism; heme A biosynthesis; heme A from heme O: step 1/1. Functionally, catalyzes the conversion of heme O to heme A by two successive hydroxylations of the methyl group at C8. The first hydroxylation forms heme I, the second hydroxylation results in an unstable dihydroxymethyl group, which spontaneously dehydrates, resulting in the formyl group of heme A. In Bacillus pumilus (strain SAFR-032), this protein is Heme A synthase.